The following is a 372-amino-acid chain: Cobalt-precorrin-5B C(1)-methyltransferase (372 aa).

The protein belongs to the CbiD family.

It catalyses the reaction Co-precorrin-5B + S-adenosyl-L-methionine = Co-precorrin-6A + S-adenosyl-L-homocysteine. It functions in the pathway cofactor biosynthesis; adenosylcobalamin biosynthesis; cob(II)yrinate a,c-diamide from sirohydrochlorin (anaerobic route): step 6/10. Its function is as follows. Catalyzes the methylation of C-1 in cobalt-precorrin-5B to form cobalt-precorrin-6A. This chain is Cobalt-precorrin-5B C(1)-methyltransferase, found in Geobacillus thermodenitrificans (strain NG80-2).